The following is a 274-amino-acid chain: MDTLLLLKAAIMGVVEGLTEFLPISSTGHLILAGSLLGFDDAKAKVFDIAIQTGAIFAVILVYWQRIRATLVALPTERQARRFALNVLIGFLPAVLLGLLLGKAIKAHLFTPVVVASTFILGGFVILWAERRQQAAVRIHAVDDMTPLDALKVGLVQCLAMVPGTSRSGATIIGGMLLGLSRKAATDYSFFLAIPTLIGAGVYSLYKERALLSAADIPLFAVGLVFSFISAWLCVRWLLRYISSHSFVPFAWYRIAFGLVVLVTAWSGLVTWAE.

6 consecutive transmembrane segments (helical) span residues 44–64 (AKVF…LVYW), 85–105 (LNVL…GKAI), 109–129 (LFTP…ILWA), 185–205 (ATDY…VYSL), 215–235 (ADIP…WLCV), and 250–270 (FAWY…SGLV).

Belongs to the UppP family.

The protein resides in the cell inner membrane. The enzyme catalyses di-trans,octa-cis-undecaprenyl diphosphate + H2O = di-trans,octa-cis-undecaprenyl phosphate + phosphate + H(+). Its function is as follows. Catalyzes the dephosphorylation of undecaprenyl diphosphate (UPP). Confers resistance to bacitracin. The sequence is that of Undecaprenyl-diphosphatase from Acidovorax ebreus (strain TPSY) (Diaphorobacter sp. (strain TPSY)).